The following is a 430-amino-acid chain: Enolase (430 aa).

Glutamine 165 contacts (2R)-2-phosphoglycerate. Glutamate 207 functions as the Proton donor in the catalytic mechanism. Mg(2+) is bound by residues aspartate 244, glutamate 287, and aspartate 314. Lysine 339, arginine 368, serine 369, and lysine 390 together coordinate (2R)-2-phosphoglycerate. Lysine 339 serves as the catalytic Proton acceptor.

This sequence belongs to the enolase family. Component of the RNA degradosome, a multiprotein complex involved in RNA processing and mRNA degradation. It depends on Mg(2+) as a cofactor.

Its subcellular location is the cytoplasm. It localises to the secreted. It is found in the cell surface. The catalysed reaction is (2R)-2-phosphoglycerate = phosphoenolpyruvate + H2O. Its pathway is carbohydrate degradation; glycolysis; pyruvate from D-glyceraldehyde 3-phosphate: step 4/5. Its function is as follows. Catalyzes the reversible conversion of 2-phosphoglycerate (2-PG) into phosphoenolpyruvate (PEP). It is essential for the degradation of carbohydrates via glycolysis. The sequence is that of Enolase from Stenotrophomonas maltophilia (strain R551-3).